We begin with the raw amino-acid sequence, 89 residues long: Small ribosomal subunit protein uS15 (89 aa).

Belongs to the universal ribosomal protein uS15 family. As to quaternary structure, part of the 30S ribosomal subunit. Forms a bridge to the 50S subunit in the 70S ribosome, contacting the 23S rRNA.

Functionally, one of the primary rRNA binding proteins, it binds directly to 16S rRNA where it helps nucleate assembly of the platform of the 30S subunit by binding and bridging several RNA helices of the 16S rRNA. Its function is as follows. Forms an intersubunit bridge (bridge B4) with the 23S rRNA of the 50S subunit in the ribosome. The chain is Small ribosomal subunit protein uS15 from Yersinia pseudotuberculosis serotype O:1b (strain IP 31758).